The sequence spans 258 residues: MSRREDGRQDDELRPVTITRGFTSHPAGSVLIEFGQTRVMCTASATEGVPRWRKGSGLGWLTAEYAMLPASTHTRSDRESVKGRVGGRTQEISRLIGRSLRACIDLSALGENTIAIDCDVLQADGGTRTAAITGAYVALADAVTYLAAHGKLADDEPLSCAIAAVSVGVVDGRVRVDLPYEEDSRAEVDMNVVATDTGTLVEVQGTGEGATFARSTLDKLLDAAVGAADQLFVLQKEALALPYPGVLPDAPQKKAFGS.

Phosphate-binding positions include Arg-88 and Gly-126–Arg-128.

This sequence belongs to the RNase PH family. Homohexameric ring arranged as a trimer of dimers.

The enzyme catalyses tRNA(n+1) + phosphate = tRNA(n) + a ribonucleoside 5'-diphosphate. Functionally, phosphorolytic 3'-5' exoribonuclease that plays an important role in tRNA 3'-end maturation. Removes nucleotide residues following the 3'-CCA terminus of tRNAs; can also add nucleotides to the ends of RNA molecules by using nucleoside diphosphates as substrates, but this may not be physiologically important. Probably plays a role in initiation of 16S rRNA degradation (leading to ribosome degradation) during starvation. In Mycobacteroides abscessus (strain ATCC 19977 / DSM 44196 / CCUG 20993 / CIP 104536 / JCM 13569 / NCTC 13031 / TMC 1543 / L948) (Mycobacterium abscessus), this protein is Ribonuclease PH.